The primary structure comprises 269 residues: MPGVETIKSSWADEVELDYGGLPPTTETVENGQKYVTEYKYNKDDKKTKVVRTYKISKQVVPKTVAKRRTWTKFGDSKNDKPGPNSQTTMVSEEIIMQFLNSKEDEKANDPLLDPTKNIAKCRICNGEHWSVNCPYKGTAMDTNMMEKKASAAAAAAVDAPKSGKYVPPFLKDSQKGALGMRGRDDTAAIRISNLSESMTEADLEELVKKIGPQSKMYLARDKNTGLCKGFAYVHFKQRKDAAAAIEILNGHGYDHLILSVEWSKPQNN.

The region spanning 188–266 (AAIRISNLSE…LILSVEWSKP (79 aa)) is the RRM domain. Serine 198 bears the Phosphoserine mark.

This sequence belongs to the eIF-3 subunit G family. Component of the eukaryotic translation initiation factor 3 (eIF-3) complex. The eIF-3 complex interacts with pix.

It is found in the cytoplasm. Functionally, RNA-binding component of the eukaryotic translation initiation factor 3 (eIF-3) complex, which is involved in protein synthesis of a specialized repertoire of mRNAs and, together with other initiation factors, stimulates binding of mRNA and methionyl-tRNAi to the 40S ribosome. The eIF-3 complex specifically targets and initiates translation of a subset of mRNAs involved in cell proliferation. This subunit can bind 18S rRNA. This Drosophila melanogaster (Fruit fly) protein is Eukaryotic translation initiation factor 3 subunit G-1.